The primary structure comprises 647 residues: Beta-glucosidase-like SFR2, chloroplastic (647 aa).

The segment at 116–140 is disordered; it reads SAAGDGGSQQSWRSTGGENIGDREQ. Residues 123 to 132 are compositionally biased toward polar residues; that stretch reads SQQSWRSTGG. N-linked (GlcNAc...) asparagine glycosylation is present at N169. Residues H258, 302-303, Y414, E466, W504, 511-512, and F520 each bind a beta-D-glucoside; these read NE and EW. E303 serves as the catalytic Proton donor. The active-site Nucleophile is E466.

This sequence belongs to the glycosyl hydrolase 1 family.

Its subcellular location is the plastid. It is found in the chloroplast outer membrane. It catalyses the reaction 2 a 1,2-diacyl-3-O-(beta-D-galactosyl)-sn-glycerol = a 1,2-diacyl-3-O-[beta-D-galactosyl-(1-&gt;6)-beta-D-galactosyl]-sn-glycerol + a 1,2-diacyl-sn-glycerol. In terms of biological role, galactosyltransferase synthesizing digalactosyldiacylglycerol from monogalactosyldiacylglycerol in the absence of UDP-galactose. Potentially involved in freezing tolerance. The chain is Beta-glucosidase-like SFR2, chloroplastic from Oryza sativa subsp. japonica (Rice).